Here is a 641-residue protein sequence, read N- to C-terminus: Chaperone protein DnaK (641 aa).

Residue threonine 200 is modified to Phosphothreonine; by autocatalysis. Low complexity predominate over residues 606-623 (AEQGGNADAASGNAQASK). Positions 606–628 (AEQGGNADAASGNAQASKAADDV) are disordered.

Belongs to the heat shock protein 70 family.

Acts as a chaperone. The polypeptide is Chaperone protein DnaK (Xanthomonas axonopodis pv. citri (strain 306)).